We begin with the raw amino-acid sequence, 615 residues long: Chaperone protein HtpG (615 aa).

Residues 1-335 are a; substrate-binding; sequence MSAEKQTHGF…APDLPLNVSR (335 aa). Residues 336–541 form a b region; sequence ELLQDYGPVQ…EDQLGPQMRR (206 aa). The interval 542 to 615 is c; the sequence is MLEAAGQPVP…RMQALLSQSV (74 aa).

It belongs to the heat shock protein 90 family. Homodimer.

The protein localises to the cytoplasm. Molecular chaperone. Has ATPase activity. The polypeptide is Chaperone protein HtpG (Alcanivorax borkumensis (strain ATCC 700651 / DSM 11573 / NCIMB 13689 / SK2)).